The sequence spans 109 residues: Glutaredoxin-C13 (109 aa).

The 107-residue stretch at 2–108 (AEMVARLASE…PMLKNAGALW (107 aa)) folds into the Glutaredoxin domain. A disulfide bond links C22 and C25. The Responsive for interaction with TGA factors motif lies at 106-109 (ALWL).

It belongs to the glutaredoxin family. CC-type subfamily.

The protein localises to the cytoplasm. Its subcellular location is the nucleus. Has a glutathione-disulfide oxidoreductase activity in the presence of NADPH and glutathione reductase. Reduces low molecular weight disulfides and proteins. This is Glutaredoxin-C13 (GRXC13) from Oryza sativa subsp. japonica (Rice).